The following is a 211-amino-acid chain: ATP phosphoribosyltransferase (211 aa).

Belongs to the ATP phosphoribosyltransferase family. Short subfamily. As to quaternary structure, heteromultimer composed of HisG and HisZ subunits.

It localises to the cytoplasm. It catalyses the reaction 1-(5-phospho-beta-D-ribosyl)-ATP + diphosphate = 5-phospho-alpha-D-ribose 1-diphosphate + ATP. It participates in amino-acid biosynthesis; L-histidine biosynthesis; L-histidine from 5-phospho-alpha-D-ribose 1-diphosphate: step 1/9. Its function is as follows. Catalyzes the condensation of ATP and 5-phosphoribose 1-diphosphate to form N'-(5'-phosphoribosyl)-ATP (PR-ATP). Has a crucial role in the pathway because the rate of histidine biosynthesis seems to be controlled primarily by regulation of HisG enzymatic activity. This Pseudomonas aeruginosa (strain UCBPP-PA14) protein is ATP phosphoribosyltransferase.